The sequence spans 366 residues: MSEVIPSSEYGRLLLENRPLIDVRAPIEFTKGAFGHSINLPLMQDGEREKVGTCYKKRGQEAAIALGHELVKGKVKQQRIDAWLAQLSQHPDSYLYCFRGGLRSKLSQQWIKESGMDIPYIEGGYKAIRSFLINTIEQAPSQSKVLILSGITGSGKTEVIHQRDESVDLEGLANHKGSSFGKNIDPQPSQINFENNLAVALLKHQQQQHNHLLLEDESMLIGRSALPKHFYSAMQQADIIVLDEPLDARLPRLLNDYVEQKLTDYVSGLGEQAGFDAFKAYLAQSLLGIRKRLGGKQHQELQDLVDNALNVQQSQNDTSKHLDWINLLLDIYYDPMYLYQLEKKQDRVIFQGDRQAIHQWLDKHKS.

The region spanning 14-137 (LLENRPLIDV…IRSFLINTIE (124 aa)) is the Rhodanese domain. Cys97 functions as the S-selanylcysteine intermediate in the catalytic mechanism.

Belongs to the SelU family. As to quaternary structure, monomer.

The enzyme catalyses 5-methylaminomethyl-2-thiouridine(34) in tRNA + selenophosphate + (2E)-geranyl diphosphate + H2O + H(+) = 5-methylaminomethyl-2-selenouridine(34) in tRNA + (2E)-thiogeraniol + phosphate + diphosphate. It catalyses the reaction 5-methylaminomethyl-2-thiouridine(34) in tRNA + (2E)-geranyl diphosphate = 5-methylaminomethyl-S-(2E)-geranyl-thiouridine(34) in tRNA + diphosphate. The catalysed reaction is 5-methylaminomethyl-S-(2E)-geranyl-thiouridine(34) in tRNA + selenophosphate + H(+) = 5-methylaminomethyl-2-(Se-phospho)selenouridine(34) in tRNA + (2E)-thiogeraniol. It carries out the reaction 5-methylaminomethyl-2-(Se-phospho)selenouridine(34) in tRNA + H2O = 5-methylaminomethyl-2-selenouridine(34) in tRNA + phosphate. Its function is as follows. Involved in the post-transcriptional modification of the uridine at the wobble position (U34) of tRNA(Lys), tRNA(Glu) and tRNA(Gln). Catalyzes the conversion of 2-thiouridine (S2U-RNA) to 2-selenouridine (Se2U-RNA). Acts in a two-step process involving geranylation of 2-thiouridine (S2U) to S-geranyl-2-thiouridine (geS2U) and subsequent selenation of the latter derivative to 2-selenouridine (Se2U) in the tRNA chain. This chain is tRNA 2-selenouridine synthase, found in Shewanella frigidimarina (strain NCIMB 400).